The sequence spans 751 residues: Photosystem I P700 chlorophyll a apoprotein A1 (751 aa).

8 helical membrane passes run 73-96 (VFSA…FHGA), 159-182 (LYAT…FHYH), 198-222 (MNHH…HISL), 294-312 (EAHH…GHQY), 349-372 (WHAQ…HHMY), 388-414 (LSLF…IFMV), 436-458 (AIIS…LYIH), and 533-551 (FLVH…LILL). [4Fe-4S] cluster contacts are provided by Cys-575 and Cys-584. 2 helical membrane passes run 591–612 (HVFL…HFSW) and 665–687 (LSAY…MFLF). A chlorophyll a'-binding site is contributed by His-676. Chlorophyll a contacts are provided by Met-684 and Tyr-692. Trp-693 is a binding site for phylloquinone. A helical membrane pass occupies residues 725–745 (AVGVAHYLLGGIATTWSFFLA).

The protein belongs to the PsaA/PsaB family. As to quaternary structure, the PsaA/B heterodimer binds the P700 chlorophyll special pair and subsequent electron acceptors. PSI consists of a core antenna complex that captures photons, and an electron transfer chain that converts photonic excitation into a charge separation. The eukaryotic PSI reaction center is composed of at least 11 subunits. The cofactor is P700 is a chlorophyll a/chlorophyll a' dimer, A0 is one or more chlorophyll a, A1 is one or both phylloquinones and FX is a shared 4Fe-4S iron-sulfur center..

It is found in the plastid. The protein resides in the chloroplast thylakoid membrane. It carries out the reaction reduced [plastocyanin] + hnu + oxidized [2Fe-2S]-[ferredoxin] = oxidized [plastocyanin] + reduced [2Fe-2S]-[ferredoxin]. In terms of biological role, psaA and PsaB bind P700, the primary electron donor of photosystem I (PSI), as well as the electron acceptors A0, A1 and FX. PSI is a plastocyanin/cytochrome c6-ferredoxin oxidoreductase, converting photonic excitation into a charge separation, which transfers an electron from the donor P700 chlorophyll pair to the spectroscopically characterized acceptors A0, A1, FX, FA and FB in turn. Oxidized P700 is reduced on the lumenal side of the thylakoid membrane by plastocyanin or cytochrome c6. The sequence is that of Photosystem I P700 chlorophyll a apoprotein A1 from Oltmannsiellopsis viridis (Marine flagellate).